Reading from the N-terminus, the 255-residue chain is Ribonuclease HII (255 aa).

The RNase H type-2 domain maps to 72–255 (AIICGIDEVG…KSFEPIKSLL (184 aa)). The a divalent metal cation site is built by D78, E79, and D170.

This sequence belongs to the RNase HII family. Mn(2+) serves as cofactor. Requires Mg(2+) as cofactor.

It is found in the cytoplasm. The enzyme catalyses Endonucleolytic cleavage to 5'-phosphomonoester.. Functionally, endonuclease that specifically degrades the RNA of RNA-DNA hybrids. The sequence is that of Ribonuclease HII from Staphylococcus aureus (strain bovine RF122 / ET3-1).